Consider the following 310-residue polypeptide: Homoserine kinase (310 aa).

Position 95–105 (95–105 (PQSRGLGSSAA)) interacts with ATP.

The protein belongs to the GHMP kinase family. Homoserine kinase subfamily.

It localises to the cytoplasm. The enzyme catalyses L-homoserine + ATP = O-phospho-L-homoserine + ADP + H(+). It functions in the pathway amino-acid biosynthesis; L-threonine biosynthesis; L-threonine from L-aspartate: step 4/5. In terms of biological role, catalyzes the ATP-dependent phosphorylation of L-homoserine to L-homoserine phosphate. The sequence is that of Homoserine kinase from Corynebacterium kroppenstedtii (strain DSM 44385 / JCM 11950 / CIP 105744 / CCUG 35717).